A 156-amino-acid polypeptide reads, in one-letter code: 6,7-dimethyl-8-ribityllumazine synthase (156 aa).

5-amino-6-(D-ribitylamino)uracil contacts are provided by residues Trp-33, 64 to 66 (SVE), and 86 to 88 (VIL). 91–92 (ET) provides a ligand contact to (2S)-2-hydroxy-3-oxobutyl phosphate. The Proton donor role is filled by His-94. Ile-119 contributes to the 5-amino-6-(D-ribitylamino)uracil binding site. Arg-133 is a binding site for (2S)-2-hydroxy-3-oxobutyl phosphate.

It belongs to the DMRL synthase family.

It carries out the reaction (2S)-2-hydroxy-3-oxobutyl phosphate + 5-amino-6-(D-ribitylamino)uracil = 6,7-dimethyl-8-(1-D-ribityl)lumazine + phosphate + 2 H2O + H(+). Its pathway is cofactor biosynthesis; riboflavin biosynthesis; riboflavin from 2-hydroxy-3-oxobutyl phosphate and 5-amino-6-(D-ribitylamino)uracil: step 1/2. Functionally, catalyzes the formation of 6,7-dimethyl-8-ribityllumazine by condensation of 5-amino-6-(D-ribitylamino)uracil with 3,4-dihydroxy-2-butanone 4-phosphate. This is the penultimate step in the biosynthesis of riboflavin. The chain is 6,7-dimethyl-8-ribityllumazine synthase from Tropheryma whipplei (strain TW08/27) (Whipple's bacillus).